Here is a 490-residue protein sequence, read N- to C-terminus: Bifunctional protein HldE (490 aa).

The ribokinase stretch occupies residues 1 to 330 (MNNFDTLLQS…RKILPHASLA (330 aa)). Position 205-208 (205-208 (NRKE)) interacts with ATP. Residue D275 is part of the active site. Residues 358-490 (FTNGCFDILH…LVEKAREGTS (133 aa)) are cytidylyltransferase.

This sequence in the N-terminal section; belongs to the carbohydrate kinase PfkB family. The protein in the C-terminal section; belongs to the cytidylyltransferase family. In terms of assembly, homodimer.

The catalysed reaction is D-glycero-beta-D-manno-heptose 7-phosphate + ATP = D-glycero-beta-D-manno-heptose 1,7-bisphosphate + ADP + H(+). It catalyses the reaction D-glycero-beta-D-manno-heptose 1-phosphate + ATP + H(+) = ADP-D-glycero-beta-D-manno-heptose + diphosphate. It participates in nucleotide-sugar biosynthesis; ADP-L-glycero-beta-D-manno-heptose biosynthesis; ADP-L-glycero-beta-D-manno-heptose from D-glycero-beta-D-manno-heptose 7-phosphate: step 1/4. It functions in the pathway nucleotide-sugar biosynthesis; ADP-L-glycero-beta-D-manno-heptose biosynthesis; ADP-L-glycero-beta-D-manno-heptose from D-glycero-beta-D-manno-heptose 7-phosphate: step 3/4. In terms of biological role, catalyzes the phosphorylation of D-glycero-D-manno-heptose 7-phosphate at the C-1 position to selectively form D-glycero-beta-D-manno-heptose-1,7-bisphosphate. Its function is as follows. Catalyzes the ADP transfer from ATP to D-glycero-beta-D-manno-heptose 1-phosphate, yielding ADP-D-glycero-beta-D-manno-heptose. This chain is Bifunctional protein HldE, found in Rhodopseudomonas palustris (strain HaA2).